The following is a 339-amino-acid chain: Fructose-1,6-bisphosphatase class 1 (339 aa).

Glu94, Asp116, Leu118, and Asp119 together coordinate Mg(2+). Residues 119 to 122 (DGSS), Asn210, and Lys276 contribute to the substrate site. Residue Glu282 coordinates Mg(2+).

It belongs to the FBPase class 1 family. In terms of assembly, homotetramer. It depends on Mg(2+) as a cofactor.

The protein resides in the cytoplasm. The catalysed reaction is beta-D-fructose 1,6-bisphosphate + H2O = beta-D-fructose 6-phosphate + phosphate. Its pathway is carbohydrate biosynthesis; gluconeogenesis. The polypeptide is Fructose-1,6-bisphosphatase class 1 (Burkholderia ambifaria (strain MC40-6)).